The following is a 493-amino-acid chain: EGF-containing fibulin-like extracellular matrix protein 1 (493 aa).

Residues 1–17 (MLQTLFLTMLTLALVKS) form the signal peptide. The EGF-like 1; atypical domain maps to 26 to 71 (YTQCTDGYEWDPIRQQCKDIDECDIVPDACKGGMKCVNHYGGYLCL). Positions 173–213 (DIDECTSGTHNCRTDQVCINLRGSFTCQCLPGYQKRGEQCV) constitute an EGF-like 2; calcium-binding domain. 15 disulfides stabilise this stretch: C177–C190, C184–C199, C201–C212, C218–C228, C224–C237, C239–C252, C258–C268, C264–C277, C279–C292, C298–C309, C305–C318, C320–C332, C338–C350, C344–C359, and C365–C377. The EGF-like 3; calcium-binding domain occupies 214-253 (DIDECTVPPYCHQRCVNTPGSFYCQCSPGFQLAANNYTCV). Residue N249 is glycosylated (N-linked (GlcNAc...) asparagine). The 40-residue stretch at 254–293 (DINECDASNQCAQQCYNILGSFICQCNQGYELSSDRLNCE) folds into the EGF-like 4; calcium-binding domain. The interval 259–493 (DASNQCAQQC…LTIIVGPFSF (235 aa)) is mediates interaction with TIMP3. The EGF-like 5; calcium-binding domain occupies 294–333 (DIDECRTSSYLCQYQCVNEPGKFSCMCPQGYEVVRSRTCQ). Residues 334 to 378 (DINECETTNECREDEMCWNYHGGFRCYPRNPCQDHYVLTSENRCV) form the EGF-like 6; calcium-binding domain.

It belongs to the fibulin family. Interacts with ECM1. Interacts with TIMP3. Expressed in the eye in the ciliary body, cornea, inner nuclear layer of the retina, and in the optic disk.

The protein resides in the secreted. Its subcellular location is the extracellular space. It localises to the extracellular matrix. In terms of biological role, binds EGFR, the EGF receptor, inducing EGFR autophosphorylation and the activation of downstream signaling pathways. May play a role in cell adhesion and migration. May function as a negative regulator of chondrocyte differentiation. In the olfactory epithelium, it may regulate glial cell migration, differentiation and the ability of glial cells to support neuronal neurite outgrowth. The polypeptide is EGF-containing fibulin-like extracellular matrix protein 1 (Efemp1) (Mus musculus (Mouse)).